We begin with the raw amino-acid sequence, 371 residues long: Alanine dehydrogenase (371 aa).

Residues R15 and K75 each contribute to the substrate site. The active-site Proton donor/acceptor is the H96. NAD(+) is bound by residues S134, 178–179, D198, K203, S220, 239–240, 267–270, R279, and 298–301; these read TA, VL, IAID, and VANM. D270 functions as the Proton donor/acceptor in the catalytic mechanism. The Mg(2+) site is built by E323 and H327.

The protein belongs to the AlaDH/PNT family. In terms of assembly, homohexamer. Trimer of dimers. It depends on Mg(2+) as a cofactor.

Its subcellular location is the secreted. The enzyme catalyses L-alanine + NAD(+) + H2O = pyruvate + NH4(+) + NADH + H(+). Its pathway is amino-acid degradation; L-alanine degradation via dehydrogenase pathway; NH(3) and pyruvate from L-alanine: step 1/1. Functionally, catalyzes the reversible reductive amination of pyruvate to L-alanine. However, since the physiological environment of M.tuberculosis has a neutral pH, it can be assumed that the enzyme catalyzes exclusively the formation of L-alanine. May play a role in cell wall synthesis as L-alanine is an important constituent of the peptidoglycan layer. The sequence is that of Alanine dehydrogenase (ald) from Mycobacterium tuberculosis (strain CDC 1551 / Oshkosh).